Reading from the N-terminus, the 320-residue chain is Mechanosensory protein 3 (320 aa).

2 consecutive LIM zinc-binding domains span residues 29 to 79 (CNCC…CSQH) and 89 to 145 (CAGC…CMTH). Residues 216–275 (RRGPRTTIKQNQLDVLNEMFSNTPKPSKHARAKKALETGLSMRVIQVWFQNRRSKERRLK) constitute a DNA-binding region (homeobox).

It is found in the nucleus. Functionally, specifies differentiation of the set of six touch receptor neurons. Binds cooperatively as a heterodimer with unc-86 to sites in the mec-3 gene promoter. The sequence is that of Mechanosensory protein 3 (mec-3) from Caenorhabditis remanei (Caenorhabditis vulgaris).